A 387-amino-acid chain; its full sequence is Signal-regulatory protein gamma (387 aa).

A signal peptide spans 1–28; it reads MPVPASWPHPPGPFLLLTLLLGLTEVAG. The region spanning 29 to 137 is the Ig-like V-type domain; it reads EEELQMIQPE…ENVEFKSGPG (109 aa). Residues 29–360 are Extracellular-facing; sequence EEELQMIQPE…QKDQSSDATP (332 aa). 2 disulfide bridges follow: Cys53/Cys119 and Cys168/Cys226. Ig-like C1-type domains are found at residues 146 to 245 and 252 to 340; these read PSAP…ANLS and PTLE…LAVS. 4 N-linked (GlcNAc...) asparagine glycosylation sites follow: Asn243, Asn268, Asn309, and Asn317. Residues Cys271 and Cys329 are joined by a disulfide bond. The helical transmembrane segment at 361–383 threads the bilayer; the sequence is GPASSLTALLLIAVLLGPIYVPW. Over 384 to 387 the chain is Cytoplasmic; it reads KQKT.

Interacts with CD47. As to expression, detected in liver, and at very low levels in brain, heart, lung, pancreas, kidney, placenta and skeletal muscle. Expressed on CD4+ T-cells, CD8+ T-cells, CD56-bright natural killer (NK) cells, CD20+ cells, and all activated NK cells. Mainly present in the paracortical T-cell area of lymph nodes, with only sparse positive cells in the mantle and in the germinal center of B-cell follicles. In the thymus, primarily expressed in the medulla on mature T-lymphocytes that have undergone thymic selection.

It localises to the membrane. Its function is as follows. Probable immunoglobulin-like cell surface receptor. On binding with CD47, mediates cell-cell adhesion. Engagement on T-cells by CD47 on antigen-presenting cells results in enhanced antigen-specific T-cell proliferation and costimulates T-cell activation. The sequence is that of Signal-regulatory protein gamma (SIRPG) from Homo sapiens (Human).